We begin with the raw amino-acid sequence, 457 residues long: PDZ and LIM domain protein 7 (457 aa).

A PDZ domain is found at 1-85 (MDSFKVVLEG…RLSLGLSRAQ (85 aa)). Ser-78 bears the Phosphoserine mark. Disordered regions lie at residues 82-142 (SRAQ…LVPD), 176-226 (TEFM…PWAV), and 239-258 (TSTV…LQSR). Arg-103 is modified (asymmetric dimethylarginine). The residue at position 111 (Ser-111) is a Phosphoserine. Over residues 208–221 (EPWPGPTAPSPTSR) the composition is skewed to pro residues. The residue at position 247 (Ser-247) is a Phosphoserine. 3 LIM zinc-binding domains span residues 280–338 (PVCH…VRYA), 339–398 (PSCA…MFGT), and 399–457 (KCHG…FSHV).

As to quaternary structure, binds via its LIM zinc-binding 3 domain (LIM 3) to endocytic codes of INSR, but not with those of IGF1R, LDLR, TFRC, or EGFR. Interacts with various PKC isoforms through the LIM zinc-binding domains. Binds to RET in a phosphorylation-independent manner via its LIM zinc-binding domain 2 (LIM 2). Probably part of a complex with SHC and the RET dimer. Interacts with TPM2. Interacts with TBX4 and TBX5. As to expression, isoform 1 and isoform 2 are expressed ubiquitously, however, isoform 2 predominates in skeletal muscle, isoform 1 is more abundant in lung, spleen, leukocytes and fetal liver.

It is found in the cytoplasm. Its subcellular location is the cytoskeleton. May function as a scaffold on which the coordinated assembly of proteins can occur. May play a role as an adapter that, via its PDZ domain, localizes LIM-binding proteins to actin filaments of both skeletal muscle and nonmuscle tissues. Involved in both of the two fundamental mechanisms of bone formation, direct bone formation (e.g. embryonic flat bones mandible and cranium), and endochondral bone formation (e.g. embryonic long bone development). Plays a role during fracture repair. Involved in BMP6 signaling pathway. The protein is PDZ and LIM domain protein 7 (PDLIM7) of Homo sapiens (Human).